Consider the following 429-residue polypeptide: 3-phosphoshikimate 1-carboxyvinyltransferase (429 aa).

Lysine 25, serine 26, and arginine 30 together coordinate 3-phosphoshikimate. Phosphoenolpyruvate is bound at residue lysine 25. The phosphoenolpyruvate site is built by glycine 99 and arginine 127. Serine 173, serine 174, glutamine 175, serine 201, aspartate 317, asparagine 340, and lysine 344 together coordinate 3-phosphoshikimate. Glutamine 175 serves as a coordination point for phosphoenolpyruvate. Catalysis depends on aspartate 317, which acts as the Proton acceptor. Phosphoenolpyruvate contacts are provided by arginine 348, arginine 390, and lysine 415.

It belongs to the EPSP synthase family. As to quaternary structure, monomer.

The protein resides in the cytoplasm. It carries out the reaction 3-phosphoshikimate + phosphoenolpyruvate = 5-O-(1-carboxyvinyl)-3-phosphoshikimate + phosphate. Its pathway is metabolic intermediate biosynthesis; chorismate biosynthesis; chorismate from D-erythrose 4-phosphate and phosphoenolpyruvate: step 6/7. Catalyzes the transfer of the enolpyruvyl moiety of phosphoenolpyruvate (PEP) to the 5-hydroxyl of shikimate-3-phosphate (S3P) to produce enolpyruvyl shikimate-3-phosphate and inorganic phosphate. This is 3-phosphoshikimate 1-carboxyvinyltransferase from Pseudoalteromonas atlantica (strain T6c / ATCC BAA-1087).